We begin with the raw amino-acid sequence, 444 residues long: Maltoporin (444 aa).

The signal sequence occupies residues 1–24 (MITLRKVPLALAIAAGILSAQAGA).

It belongs to the porin LamB (TC 1.B.3) family. As to quaternary structure, homotrimer formed of three 18-stranded antiparallel beta-barrels, containing three independent channels.

It localises to the cell outer membrane. The catalysed reaction is beta-maltose(in) = beta-maltose(out). In terms of biological role, involved in the transport of maltose and maltodextrins. This Enterobacter sp. (strain 638) protein is Maltoporin.